The following is a 103-amino-acid chain: UPF0145 protein pXO2-45/BXB0052/GBAA_pXO2_0052 (103 aa).

Belongs to the UPF0145 family.

This chain is UPF0145 protein pXO2-45/BXB0052/GBAA_pXO2_0052, found in Bacillus anthracis.